A 315-amino-acid chain; its full sequence is Methionyl-tRNA formyltransferase (315 aa).

The N-terminal domain stretch occupies residues 2–189; that stretch reads SDSLRIIFAG…LITTLKQLAD (188 aa). 113-116 is a (6S)-5,6,7,8-tetrahydrofolate binding site; that stretch reads SLLP. The tract at residues 210 to 315 is C-terminal domain; it reads KEEARIDWSL…EWFIPGNRLA (106 aa).

Belongs to the Fmt family.

It carries out the reaction L-methionyl-tRNA(fMet) + (6R)-10-formyltetrahydrofolate = N-formyl-L-methionyl-tRNA(fMet) + (6S)-5,6,7,8-tetrahydrofolate + H(+). Its function is as follows. Attaches a formyl group to the free amino group of methionyl-tRNA(fMet). The formyl group appears to play a dual role in the initiator identity of N-formylmethionyl-tRNA by promoting its recognition by IF2 and preventing the misappropriation of this tRNA by the elongation apparatus. In Salmonella choleraesuis (strain SC-B67), this protein is Methionyl-tRNA formyltransferase.